We begin with the raw amino-acid sequence, 349 residues long: MISVGIVGGTGYTGVELLRILLRHPKAQVRVLTSRTEAGKPVADMFPNLRGHTDLHFSDLNIDALKECDVVFFATPHGVAMQHAKDLIAAGTKVIDLAADFRLQNLEQFEKWYGMEHACPDVLKDSVYGLTELNREKIKQAQVIGNPGCYPTTVQLGLAPLLKSAQALIETKNIIIDAKSGVSGAGRKASLGMIYSENADNFKAYGVAGHRHHPEIVEALENIAGKKDVFEGLLFVPHLVPMIRGMLSTIYVDLTEAGKQTDLQALYENFYANEKFVDVMPANSSPETRSVRGANELRIALYKPQPNKLIILAAQDNLVKGASGQAVQNMNLMFGFNEDEGLQGIGLLP.

Residue Cys-149 is part of the active site.

This sequence belongs to the NAGSA dehydrogenase family. Type 1 subfamily.

The protein localises to the cytoplasm. It catalyses the reaction N-acetyl-L-glutamate 5-semialdehyde + phosphate + NADP(+) = N-acetyl-L-glutamyl 5-phosphate + NADPH + H(+). It functions in the pathway amino-acid biosynthesis; L-arginine biosynthesis; N(2)-acetyl-L-ornithine from L-glutamate: step 3/4. Functionally, catalyzes the NADPH-dependent reduction of N-acetyl-5-glutamyl phosphate to yield N-acetyl-L-glutamate 5-semialdehyde. The sequence is that of N-acetyl-gamma-glutamyl-phosphate reductase from Acinetobacter baumannii (strain ACICU).